The following is a 211-amino-acid chain: Arginine exporter protein ArgO (211 aa).

The next 6 membrane-spanning stretches (helical) occupy residues 1-21 (MISY…PLGP), 37-57 (LMIA…GIFG), 68-88 (LLAL…FGAL), 111-131 (IIAT…DTFV), 147-167 (WFAL…ALLA), and 179-199 (AQRI…FQLA).

It belongs to the LysE/ArgO transporter (TC 2.A.75) family.

The protein localises to the cell inner membrane. The catalysed reaction is L-arginine(in) = L-arginine(out). Its function is as follows. Involved in the export of arginine. Important to control the intracellular level of arginine and the correct balance between arginine and lysine. The polypeptide is Arginine exporter protein ArgO (Salmonella typhimurium (strain LT2 / SGSC1412 / ATCC 700720)).